Here is a 202-residue protein sequence, read N- to C-terminus: Nascent polypeptide-associated complex subunit alpha (202 aa).

A compositionally biased stretch (basic and acidic residues) spans methionine 1–valine 19. The segment at methionine 1–valine 41 is disordered. In terms of domain architecture, NAC-A/B spans serine 45–alanine 110. The span at glutamine 117–glutamate 127 shows a compositional bias: low complexity. The interval glutamine 117 to alanine 165 is disordered. The span at histidine 128 to glutamate 149 shows a compositional bias: basic and acidic residues. Positions glutamate 150–glycine 162 are enriched in acidic residues. Residues leucine 163–isoleucine 202 enclose the UBA domain.

Belongs to the NAC-alpha family. Part of the nascent polypeptide-associated complex (NAC), consisting of egd2 and egd1. NAC associates with ribosomes via egd1.

The protein resides in the cytoplasm. Its subcellular location is the nucleus. Component of the nascent polypeptide-associated complex (NAC), a dynamic component of the ribosomal exit tunnel, protecting the emerging polypeptides from interaction with other cytoplasmic proteins to ensure appropriate nascent protein targeting. The NAC complex also promotes mitochondrial protein import by enhancing productive ribosome interactions with the outer mitochondrial membrane and blocks the inappropriate interaction of ribosomes translating non-secretory nascent polypeptides with translocation sites in the membrane of the endoplasmic reticulum. Egd2 may also be involved in transcription regulation. The polypeptide is Nascent polypeptide-associated complex subunit alpha (egd2) (Aspergillus oryzae (strain ATCC 42149 / RIB 40) (Yellow koji mold)).